The chain runs to 123 residues: DPEP2 neighbor protein (123 aa).

Residues 67 to 123 (APLATPTKAEAEKPAPRRAPKRRQATIESDKDLGCSSPKIRRLEHRGRRLTPQKLAG) form a disordered region. The span at 105 to 117 (KIRRLEHRGRRLT) shows a compositional bias: basic residues.

The sequence is that of DPEP2 neighbor protein from Homo sapiens (Human).